Here is a 510-residue protein sequence, read N- to C-terminus: NAD(P)H-quinone oxidoreductase subunit 2, chloroplastic (510 aa).

Helical transmembrane passes span 24-44 (LLLFHGSFIFPECILIFGLIL), 59-79 (WFYFISSTSLIISITALLFRW), 99-119 (IFQFLILLCSTLCIPLSVEYI), 124-144 (MAITEFLLFVLTATLGGMFLC), 149-169 (LITIFVAPECFSLCSYLLSGY), 183-203 (YLLMGGASSSILVHGFSWLYG), 229-249 (ISIALISITVGIGFKLSPAPF), 295-315 (WHLLLEILAILSMILGNLIAI), 323-343 (MLAYSSIGQIGYVIIGIIVGD), 354-374 (YMLFYISMNLGTFACIVLFGL), 395-415 (ALSSALCLLSLGGLPPLAGFF), and 418-438 (LHLFWCGWQAGLYFLVSIGLL).

The protein belongs to the complex I subunit 2 family. As to quaternary structure, NDH is composed of at least 16 different subunits, 5 of which are encoded in the nucleus.

The protein localises to the plastid. It is found in the chloroplast thylakoid membrane. It carries out the reaction a plastoquinone + NADH + (n+1) H(+)(in) = a plastoquinol + NAD(+) + n H(+)(out). It catalyses the reaction a plastoquinone + NADPH + (n+1) H(+)(in) = a plastoquinol + NADP(+) + n H(+)(out). NDH shuttles electrons from NAD(P)H:plastoquinone, via FMN and iron-sulfur (Fe-S) centers, to quinones in the photosynthetic chain and possibly in a chloroplast respiratory chain. The immediate electron acceptor for the enzyme in this species is believed to be plastoquinone. Couples the redox reaction to proton translocation, and thus conserves the redox energy in a proton gradient. The sequence is that of NAD(P)H-quinone oxidoreductase subunit 2, chloroplastic from Ensete ventricosum (Abyssinian banana).